We begin with the raw amino-acid sequence, 243 residues long: 3-deoxy-manno-octulosonate cytidylyltransferase (243 aa).

It belongs to the KdsB family.

Its subcellular location is the cytoplasm. The enzyme catalyses 3-deoxy-alpha-D-manno-oct-2-ulosonate + CTP = CMP-3-deoxy-beta-D-manno-octulosonate + diphosphate. It participates in nucleotide-sugar biosynthesis; CMP-3-deoxy-D-manno-octulosonate biosynthesis; CMP-3-deoxy-D-manno-octulosonate from 3-deoxy-D-manno-octulosonate and CTP: step 1/1. Functionally, activates KDO (a required 8-carbon sugar) for incorporation into bacterial lipopolysaccharide in Gram-negative bacteria. The polypeptide is 3-deoxy-manno-octulosonate cytidylyltransferase (Wigglesworthia glossinidia brevipalpis).